The sequence spans 366 residues: Aldo-keto reductase AFTS1 (366 aa).

NADP(+) is bound at residue Asp-75. Tyr-80 functions as the Proton donor in the catalytic mechanism. His-172 lines the substrate pocket. NADP(+) contacts are provided by residues 202–203 (SS), Gln-228, 257–267 (GSLASGRLARP), and 329–337 (SSVERIDEA).

The protein belongs to the aldo/keto reductase family.

Its pathway is mycotoxin biosynthesis. In terms of biological role, aldo-keto reductase; part of the gene clusters that mediate the biosynthesis of the host-selective toxins (HSTs) AF-toxins responsible for Alternaria black spot of strawberry disease by the strawberry pathotype. AF-toxin I and III are valine derivatives of 2,3-dyhydroxy-isovaleric acid and 2-hydroxy-isovaleric acid respectively, while AF II is an isoleucine derivative of 2-hydroxy-valeric acid. These derivatives are bound to a 9,10-epoxy-8-hydroxy-9-methyl-decatrienoic acid (EDA) moiety. On cellular level, AF-toxins affect plasma membrane of susceptible cells and cause a sudden increase in loss of K(+) after a few minutes of toxin treatment. The aldo-keto reductase AFTS1 catalyzes the conversion of 2-keto-isovaleric acid (2-KIV) to 2-hydroxy-isovaleric acid (2-HIV) by reduction of its ketone to an alcohol. The acyl-CoA ligase AFT1, the hydrolase AFT2 and the enoyl-CoA hydratases AFT3 and AFT6, but also the polyketide synthase AFT9, the acyl-CoA dehydrogenase AFT10, the cytochrome P450 monooxygenase AFT11 and the oxidoreductase AFT12 are all involved in the biosynthesis of the AK-, AF- and ACT-toxin common EDA structural moiety. The exact function of each enzyme, and of additional enzymes identified within the AF-toxin clusters have still to be determined. This is Aldo-keto reductase AFTS1 from Alternaria alternata (Alternaria rot fungus).